Here is a 113-residue protein sequence, read N- to C-terminus: MAGHRKLGRPTDQRMAMLRNQVTSLLKSGKIETTVTRAKETRSLAEKMITLGKRGDLQARRQALSFVTEEEVVKRLFDDIAPKYAERNGGYTRMYKVGPRRGDGAEIVILELV.

The protein belongs to the bacterial ribosomal protein bL17 family. As to quaternary structure, part of the 50S ribosomal subunit. Contacts protein L32.

In Clostridium tetani (strain Massachusetts / E88), this protein is Large ribosomal subunit protein bL17.